Consider the following 968-residue polypeptide: RNA polymerase-associated protein RapA (968 aa).

The Helicase ATP-binding domain occupies 164-334 (DVGRRHAPRV…FARLRLLDPN (171 aa)). 177–184 (DEVGLGKT) is an ATP binding site. The short motif at 280 to 283 (DEAH) is the DEAH box element. In terms of domain architecture, Helicase C-terminal spans 490–662 (RVEWLMGYLT…YLASPDQTEG (173 aa)).

Belongs to the SNF2/RAD54 helicase family. RapA subfamily. In terms of assembly, interacts with the RNAP. Has a higher affinity for the core RNAP than for the holoenzyme. Its ATPase activity is stimulated by binding to RNAP.

In terms of biological role, transcription regulator that activates transcription by stimulating RNA polymerase (RNAP) recycling in case of stress conditions such as supercoiled DNA or high salt concentrations. Probably acts by releasing the RNAP, when it is trapped or immobilized on tightly supercoiled DNA. Does not activate transcription on linear DNA. Probably not involved in DNA repair. In Shigella flexneri serotype 5b (strain 8401), this protein is RNA polymerase-associated protein RapA.